Consider the following 288-residue polypeptide: Probable ketoamine kinase VC_1539 (288 aa).

92 to 94 (NYL) contacts ATP. The active-site Proton acceptor is the Asp195.

It belongs to the fructosamine kinase family.

Functionally, ketoamine kinase that phosphorylates ketoamines on the third carbon of the sugar moiety to generate ketoamine 3-phosphate. This is Probable ketoamine kinase VC_1539 from Vibrio cholerae serotype O1 (strain ATCC 39315 / El Tor Inaba N16961).